The sequence spans 294 residues: Probable endonuclease 4 (294 aa).

Zn(2+) contacts are provided by His-78, His-118, Glu-157, Asp-191, His-194, His-228, Asp-241, His-243, and Glu-273.

It belongs to the AP endonuclease 2 family. Zn(2+) is required as a cofactor.

The catalysed reaction is Endonucleolytic cleavage to 5'-phosphooligonucleotide end-products.. Endonuclease IV plays a role in DNA repair. It cleaves phosphodiester bonds at apurinic or apyrimidinic (AP) sites, generating a 3'-hydroxyl group and a 5'-terminal sugar phosphate. The sequence is that of Probable endonuclease 4 from Streptomyces coelicolor (strain ATCC BAA-471 / A3(2) / M145).